Here is a 297-residue protein sequence, read N- to C-terminus: N-acetylneuraminate lyase (297 aa).

2 residues coordinate aceneuramate: S47 and T48. The Proton donor role is filled by Y137. The active-site Schiff-base intermediate with substrate is K165. T167, G189, D191, E192, and S208 together coordinate aceneuramate.

The protein belongs to the DapA family. NanA subfamily. As to quaternary structure, homotetramer.

The protein resides in the cytoplasm. The enzyme catalyses aceneuramate = aldehydo-N-acetyl-D-mannosamine + pyruvate. It functions in the pathway amino-sugar metabolism; N-acetylneuraminate degradation; D-fructose 6-phosphate from N-acetylneuraminate: step 1/5. Catalyzes the reversible aldol cleavage of N-acetylneuraminic acid (sialic acid; Neu5Ac) to form pyruvate and N-acetylmannosamine (ManNAc) via a Schiff base intermediate. This is N-acetylneuraminate lyase from Salmonella choleraesuis (strain SC-B67).